The sequence spans 483 residues: Trigger factor (483 aa).

A PPIase FKBP-type domain is found at 166–251; sequence TDTVNIDYVG…INDVFTKEKP (86 aa). Residues 435–460 are compositionally biased toward basic and acidic residues; it reads GEEPKLSTTKKVVEPTEEKTRKDSKM. Positions 435–483 are disordered; it reads GEEPKLSTTKKVVEPTEEKTRKDSKMSTKKPAAKPAAKPAAATKKPVKK. Residues 467 to 483 show a composition bias toward low complexity; it reads AKPAAKPAAATKKPVKK.

The protein belongs to the FKBP-type PPIase family. Tig subfamily.

It is found in the cytoplasm. The catalysed reaction is [protein]-peptidylproline (omega=180) = [protein]-peptidylproline (omega=0). In terms of biological role, involved in protein export. Acts as a chaperone by maintaining the newly synthesized protein in an open conformation. Functions as a peptidyl-prolyl cis-trans isomerase. This chain is Trigger factor, found in Mycoplasma mobile (strain ATCC 43663 / 163K / NCTC 11711) (Mesomycoplasma mobile).